The chain runs to 214 residues: Probable GTP-binding protein EngB (214 aa).

Residues 22–194 (HLPEIAFAGR…WARIDALLEP (173 aa)) enclose the EngB-type G domain. Residues 30 to 37 (GRSNVGKS), 57 to 61 (GRTQL), 75 to 78 (DLPG), 142 to 145 (TKCD), and 173 to 175 (FSA) contribute to the GTP site. Mg(2+) is bound by residues serine 37 and threonine 59. The segment at 195-214 (TAAETPGIPEEPAPPGPVND) is disordered. Pro residues predominate over residues 203-214 (PEEPAPPGPVND).

It belongs to the TRAFAC class TrmE-Era-EngA-EngB-Septin-like GTPase superfamily. EngB GTPase family. The cofactor is Mg(2+).

In terms of biological role, necessary for normal cell division and for the maintenance of normal septation. In Geobacter sp. (strain M21), this protein is Probable GTP-binding protein EngB.